Reading from the N-terminus, the 429-residue chain is Uterine milk protein (429 aa).

Residues 1-25 (MSHRRMQLALSLVFILCGLFNSIFC) form the signal peptide. N-linked (GlcNAc...) asparagine glycans are attached at residues Asn222 and Asn268.

Belongs to the serpin family. UTMP subfamily. In terms of processing, glycosylated; carries the so-called mannose 6-phosphate lysosomal recognition marker on its carbohydrate chains. Secreted by ovine endometrium under the influence of progesterone.

The protein is Uterine milk protein of Ovis aries (Sheep).